The primary structure comprises 701 residues: Methionine--tRNA ligase (701 aa).

Residues 13-23 carry the 'HIGH' region motif; sequence PYANGSIHLGH. 4 residues coordinate Zn(2+): Cys-144, Cys-147, Cys-157, and Cys-160. The 'KMSKS' region motif lies at 336–340; the sequence is KMSKS. Lys-339 is a binding site for ATP. The tRNA-binding domain occupies 600-701; sequence DFSKIDLRIA…SGAQPGMRVK (102 aa).

It belongs to the class-I aminoacyl-tRNA synthetase family. MetG type 1 subfamily. Homodimer. Requires Zn(2+) as cofactor.

It is found in the cytoplasm. It catalyses the reaction tRNA(Met) + L-methionine + ATP = L-methionyl-tRNA(Met) + AMP + diphosphate. Its function is as follows. Is required not only for elongation of protein synthesis but also for the initiation of all mRNA translation through initiator tRNA(fMet) aminoacylation. The sequence is that of Methionine--tRNA ligase from Nitrosomonas eutropha (strain DSM 101675 / C91 / Nm57).